Consider the following 298-residue polypeptide: HTH-type transcriptional regulator CzcR (298 aa).

The HTH lysR-type domain occupies 11–68 (MELRDLQIFQSVADQGSVSSAAKELNYVQSNVTARIKQLENELKTPLFYRHKRGMTLT). The H-T-H motif DNA-binding region spans 28-47 (VSSAAKELNYVQSNVTARIK).

This sequence belongs to the LysR transcriptional regulatory family.

The sequence is that of HTH-type transcriptional regulator CzcR (czcR) from Bacillus thuringiensis (strain Al Hakam).